We begin with the raw amino-acid sequence, 109 residues long: Large ribosomal subunit protein uL22 (109 aa).

It belongs to the universal ribosomal protein uL22 family. As to quaternary structure, part of the 50S ribosomal subunit.

This protein binds specifically to 23S rRNA; its binding is stimulated by other ribosomal proteins, e.g. L4, L17, and L20. It is important during the early stages of 50S assembly. It makes multiple contacts with different domains of the 23S rRNA in the assembled 50S subunit and ribosome. Functionally, the globular domain of the protein is located near the polypeptide exit tunnel on the outside of the subunit, while an extended beta-hairpin is found that lines the wall of the exit tunnel in the center of the 70S ribosome. In Aromatoleum aromaticum (strain DSM 19018 / LMG 30748 / EbN1) (Azoarcus sp. (strain EbN1)), this protein is Large ribosomal subunit protein uL22.